Consider the following 379-residue polypeptide: Alcohol dehydrogenase class-2 isozyme 2 (379 aa).

Zn(2+)-binding residues include Cys47, His69, Cys99, Cys102, Cys105, Cys113, and Cys176. NAD(+) contacts are provided by residues 205–210 (GLGGVG), Asp229, Lys234, 298–300 (VGV), and Arg374.

It belongs to the zinc-containing alcohol dehydrogenase family. Class-II subfamily. Homodimer. It depends on Zn(2+) as a cofactor.

It is found in the cytoplasm. The catalysed reaction is a primary alcohol + NAD(+) = an aldehyde + NADH + H(+). The enzyme catalyses a secondary alcohol + NAD(+) = a ketone + NADH + H(+). The polypeptide is Alcohol dehydrogenase class-2 isozyme 2 (ADH2-2) (Oryctolagus cuniculus (Rabbit)).